The chain runs to 316 residues: Beta-ketoacyl-[acyl-carrier-protein] synthase III (316 aa).

Active-site residues include C112 and H243. The segment at 244–248 is ACP-binding; it reads QANIR. The active site involves N273.

The protein belongs to the thiolase-like superfamily. FabH family. As to quaternary structure, homodimer.

The protein localises to the cytoplasm. The catalysed reaction is malonyl-[ACP] + acetyl-CoA + H(+) = 3-oxobutanoyl-[ACP] + CO2 + CoA. The protein operates within lipid metabolism; fatty acid biosynthesis. Its function is as follows. Catalyzes the condensation reaction of fatty acid synthesis by the addition to an acyl acceptor of two carbons from malonyl-ACP. Catalyzes the first condensation reaction which initiates fatty acid synthesis and may therefore play a role in governing the total rate of fatty acid production. Possesses both acetoacetyl-ACP synthase and acetyl transacylase activities. Its substrate specificity determines the biosynthesis of branched-chain and/or straight-chain of fatty acids. The chain is Beta-ketoacyl-[acyl-carrier-protein] synthase III from Actinobacillus pleuropneumoniae serotype 5b (strain L20).